The primary structure comprises 100 residues: Large ribosomal subunit protein uL23 (100 aa).

The protein belongs to the universal ribosomal protein uL23 family. In terms of assembly, part of the 50S ribosomal subunit. Contacts protein L29, and trigger factor when it is bound to the ribosome.

One of the early assembly proteins it binds 23S rRNA. One of the proteins that surrounds the polypeptide exit tunnel on the outside of the ribosome. Forms the main docking site for trigger factor binding to the ribosome. In Prochlorococcus marinus (strain MIT 9301), this protein is Large ribosomal subunit protein uL23.